Reading from the N-terminus, the 111-residue chain is Cell division protein FtsB (111 aa).

The Cytoplasmic portion of the chain corresponds to methionine 1–leucine 3. A helical membrane pass occupies residues isoleucine 4–leucine 21. Topologically, residues glycine 22–histidine 111 are periplasmic. A coiled-coil region spans residues aspartate 31–threonine 64. The interval alanine 89–histidine 111 is disordered.

This sequence belongs to the FtsB family. As to quaternary structure, part of a complex composed of FtsB, FtsL and FtsQ.

It is found in the cell inner membrane. Essential cell division protein. May link together the upstream cell division proteins, which are predominantly cytoplasmic, with the downstream cell division proteins, which are predominantly periplasmic. The sequence is that of Cell division protein FtsB from Ralstonia pickettii (strain 12J).